A 153-amino-acid chain; its full sequence is Penitrem biosynthesis cluster 1 protein I (153 aa).

It participates in secondary metabolite biosynthesis. Functionally, part of the gene cluster that mediates the biosynthesis of the indole diterpenes penitrems. The geranylgeranyl diphosphate (GGPP) synthase ptmG catalyzes the first step in penitrem biosynthesis via conversion of farnesyl pyrophosphate and isopentyl pyrophosphate into geranylgeranyl pyrophosphate (GGPP). Condensation of indole-3-glycerol phosphate with GGPP by the prenyl transferase ptmC then forms 3-geranylgeranylindole (3-GGI). Epoxidation by the FAD-dependent monooxygenase ptmM leads to a epoxidized-GGI that is substrate of the terpene cyclase ptmB for cyclization to yield paspaline. Paspaline is subsequently converted to 13-desoxypaxilline by the cytochrome P450 monooxygenase ptmP, the latter being then converted to paxilline by the cytochrome P450 monooxygenase ptmQ. Paxilline is converted to beta-paxitriol via C-10 ketoreduction by the short-chain dehydrogenase ptmH which can be monoprenylated at the C-20 by the indole diterpene prenyltransferase ptmD. A two-step elimination (acetylation and elimination) process performed by the O-acetyltransferase ptmV and ptmI leads to the production of the prenylated form of penijanthine. The FAD-linked oxidoreductase ptmO then converts the prenylated form of penijanthine into PC-M5 which is in turn transformed into PC-M4 by the aromatic dimethylallyltransferase ptmE. Five sequential oxidative transformations performed by the cytochrome P450 monooxygenases ptmK, ptmU, ptmL, ptmN and ptmJ yield the various penitrem compounds. PtmK, ptmU and ptmM are involved in the formation of the key bicyclic ring of penitrem C via the formation of the intermediates secopenitrem D and penitrem D. PtmL catalyzes the epoxidation of penitrem D and C to yield penitrem B and F, respectively. PtmJ catalyzes the last benzylic hydroxylation to convert penitrem B to prenitrem E and penitrem F to penitrem A. The chain is Penitrem biosynthesis cluster 1 protein I from Penicillium ochrochloron.